Here is a 199-residue protein sequence, read N- to C-terminus: dITP/XTP pyrophosphatase (199 aa).

7 to 12 (TGNAGK) is a binding site for substrate. Asp68 serves as the catalytic Proton acceptor. Asp68 is a Mg(2+) binding site. Substrate-binding positions include Ser69, 153-156 (FGYD), Lys176, and 181-182 (HR).

This sequence belongs to the HAM1 NTPase family. Homodimer. Mg(2+) serves as cofactor.

The enzyme catalyses XTP + H2O = XMP + diphosphate + H(+). It carries out the reaction dITP + H2O = dIMP + diphosphate + H(+). It catalyses the reaction ITP + H2O = IMP + diphosphate + H(+). Functionally, pyrophosphatase that catalyzes the hydrolysis of nucleoside triphosphates to their monophosphate derivatives, with a high preference for the non-canonical purine nucleotides XTP (xanthosine triphosphate), dITP (deoxyinosine triphosphate) and ITP. Seems to function as a house-cleaning enzyme that removes non-canonical purine nucleotides from the nucleotide pool, thus preventing their incorporation into DNA/RNA and avoiding chromosomal lesions. This is dITP/XTP pyrophosphatase from Halorhodospira halophila (strain DSM 244 / SL1) (Ectothiorhodospira halophila (strain DSM 244 / SL1)).